Here is a 20-residue protein sequence, read N- to C-terminus: DELTA-actitoxin-Afr1b (20 aa).

The protein belongs to the actinoporin family. Sea anemone subfamily. Octamer or nonamer in membranes. Monomer in the soluble state.

Its subcellular location is the secreted. The protein resides in the nematocyst. It is found in the target cell membrane. Its function is as follows. Pore-forming toxin (PFT) that consists of a crown-shaped octamer or nonamer that forms cation-selective hydrophilic pores of about 1.5 nm (inside) and 13 nm (outside) and causes cytolysis. It causes cardiac stimulation. Also causes hemolysis (HC(50)=0.4 nM). Interestingly, the Phe-16 is crucial for hemolysis. Pore formation is a multi-step process that involves specific recognition of membrane sphingomyelin (but neither cholesterol nor phosphatidylcholine) using aromatic rich region and adjacent phosphocholine (POC) binding site, firm binding to the membrane (mainly driven by hydrophobic interactions) accompanied by the transfer of the N-terminal region to the lipid-water interface and finally pore formation after oligomerization of monomers. It is probable that a dimeric form is an assembly intermediate before the complete oligomerization. The formation of stable pores occurs only in vesicles composed of DOPC/SM (there is no oligomerization when the PFT is treated with vesicles of DOPC or SM alone). The transmembrane pore displays 8 lateral perforations, one at each subunit-subunit interface, partially occupied by the acyl-chain region of a bridging lipid. Each pore contains 24 lipid molecules, firmly bound to each subunit, that is, 3 lipids (L1, L2, L3, L4 and/or L5) are associated to each subunit. Lipid L1 bridges 2 subunits, whereas lipids L2 and L3 bind to sites at single subunit. This Actinia fragacea (Strawberry anemone) protein is DELTA-actitoxin-Afr1b.